We begin with the raw amino-acid sequence, 458 residues long: Phosphoglucosamine mutase (458 aa).

The active-site Phosphoserine intermediate is Ser102. Mg(2+) is bound by residues Ser102, Asp252, Asp254, and Asp256. Phosphoserine is present on Ser102.

This sequence belongs to the phosphohexose mutase family. Requires Mg(2+) as cofactor. Activated by phosphorylation.

The catalysed reaction is alpha-D-glucosamine 1-phosphate = D-glucosamine 6-phosphate. Functionally, catalyzes the conversion of glucosamine-6-phosphate to glucosamine-1-phosphate. The sequence is that of Phosphoglucosamine mutase from Anaeromyxobacter dehalogenans (strain 2CP-C).